Consider the following 984-residue polypeptide: Protein translocase subunit SecA (984 aa).

Residues Gln-96, 114 to 118 (GEGKT), and Asp-595 each bind ATP. Composition is skewed to basic and acidic residues over residues 930 to 942 (EHEE…RLLE) and 952 to 971 (KSDK…EERL). Residues 930-984 (EHEEEKKHQRLLEEAELQGVQGKSDKKPRPKTLKERLKEERLRKRKLKAKKKEQE) are disordered. Residues 972–984 (RKRKLKAKKKEQE) are compositionally biased toward basic residues.

Belongs to the SecA family. Monomer and homodimer. Part of the essential Sec protein translocation apparatus which comprises SecA, SecYEG and auxiliary proteins SecDF. Other proteins may also be involved.

The protein localises to the cell inner membrane. It is found in the cytoplasm. It carries out the reaction ATP + H2O + cellular proteinSide 1 = ADP + phosphate + cellular proteinSide 2.. Functionally, part of the Sec protein translocase complex. Interacts with the SecYEG preprotein conducting channel. Has a central role in coupling the hydrolysis of ATP to the transfer of proteins into and across the cell membrane, serving as an ATP-driven molecular motor driving the stepwise translocation of polypeptide chains across the membrane. This is Protein translocase subunit SecA from Aquifex aeolicus (strain VF5).